A 488-amino-acid chain; its full sequence is GTPase Der (488 aa).

EngA-type G domains are found at residues 3–166 (PVVA…VSDG) and 201–374 (IKLA…QCAT). GTP contacts are provided by residues 9 to 16 (GRPNVGKS), 56 to 60 (DTGGI), 118 to 121 (NKTD), 207 to 214 (GRPNVGKS), 254 to 258 (DTAGV), and 319 to 322 (NKWD). Residues 375–459 (KRVSTALLTR…PIRIQFNEGA (85 aa)) enclose the KH-like domain.

Belongs to the TRAFAC class TrmE-Era-EngA-EngB-Septin-like GTPase superfamily. EngA (Der) GTPase family. As to quaternary structure, associates with the 50S ribosomal subunit.

Functionally, GTPase that plays an essential role in the late steps of ribosome biogenesis. In Sodalis glossinidius (strain morsitans), this protein is GTPase Der.